The sequence spans 91 residues: MSRSIKKGFFVDYHLLEKIEKANKAGAKKPIQTWSRRSTITPDFVGHTFSVHNGKAFIAVYVTENMVGHKLGEFALTRIFKAHGGMTRKEI.

The protein belongs to the universal ribosomal protein uS19 family.

In terms of biological role, protein S19 forms a complex with S13 that binds strongly to the 16S ribosomal RNA. This chain is Small ribosomal subunit protein uS19, found in Opitutus terrae (strain DSM 11246 / JCM 15787 / PB90-1).